Reading from the N-terminus, the 967-residue chain is Phosphatidylserine decarboxylase proenzyme 3 (967 aa).

The segment at 217-255 (FIAEPDSSIPPSESSVSISTDTGKETPPSKSKKSSNQPY) is disordered. Positions 220-237 (EPDSSIPPSESSVSISTD) are enriched in low complexity. Residues 250 to 373 (SSNQPYVSIG…SSAQVDPETG (124 aa)) form the C2 domain. Ca(2+)-binding residues include Asp-343, Ser-346, and Asp-349. A compositionally biased stretch (low complexity) spans 532-544 (DQQATQTPQSPSS). Positions 532-566 (DQQATQTPQSPSSNEESGPGTPTQTSDQYEDSEDS) are disordered. Residues 545–558 (NEESGPGTPTQTSD) show a composition bias toward polar residues. Active-site charge relay system; for autoendoproteolytic cleavage activity residues include Asp-769, His-825, and Ser-912. Residue Ser-912 is the Schiff-base intermediate with substrate; via pyruvic acid; for decarboxylase activity of the active site. Pyruvic acid (Ser); by autocatalysis is present on Ser-912. Residues 947-967 (IGQKIDPNKPTDAEDHSKSDS) are disordered.

The protein belongs to the phosphatidylserine decarboxylase family. PSD-B subfamily. Eukaryotic type II sub-subfamily. In terms of assembly, heterodimer of a large membrane-associated beta subunit and a small pyruvoyl-containing alpha subunit. Pyruvate serves as cofactor. It depends on Ca(2+) as a cofactor. In terms of processing, is synthesized initially as an inactive proenzyme. Formation of the active enzyme involves a self-maturation process in which the active site pyruvoyl group is generated from an internal serine residue via an autocatalytic post-translational modification. Two non-identical subunits are generated from the proenzyme in this reaction, and the pyruvate is formed at the N-terminus of the alpha chain, which is derived from the carboxyl end of the proenzyme. The autoendoproteolytic cleavage occurs by a canonical serine protease mechanism, in which the side chain hydroxyl group of the serine supplies its oxygen atom to form the C-terminus of the beta chain, while the remainder of the serine residue undergoes an oxidative deamination to produce ammonia and the pyruvoyl prosthetic group on the alpha chain. During this reaction, the Ser that is part of the protease active site of the proenzyme becomes the pyruvoyl prosthetic group, which constitutes an essential element of the active site of the mature decarboxylase.

The protein localises to the golgi apparatus membrane. It is found in the endosome membrane. The protein resides in the cytoplasm. The enzyme catalyses a 1,2-diacyl-sn-glycero-3-phospho-L-serine + H(+) = a 1,2-diacyl-sn-glycero-3-phosphoethanolamine + CO2. Its pathway is phospholipid metabolism; phosphatidylethanolamine biosynthesis; phosphatidylethanolamine from CDP-diacylglycerol: step 2/2. Its function is as follows. Catalyzes the formation of phosphatidylethanolamine (PtdEtn) from phosphatidylserine (PtdSer). Plays a central role in phospholipid metabolism and in the interorganelle trafficking of phosphatidylserine. Together with psd1 and psd2, responsible for the majority of phosphatidylethanolamine synthesis. In Schizosaccharomyces pombe (strain 972 / ATCC 24843) (Fission yeast), this protein is Phosphatidylserine decarboxylase proenzyme 3.